A 491-amino-acid polypeptide reads, in one-letter code: Mitochondrial distribution and morphology protein 12 (491 aa).

The SMP-LTD domain maps to 1-491 (MSIDLNWEAA…VFPSYWTFLV (491 aa)). Residues 72 to 82 (ESDSSEDEDGE) show a composition bias toward acidic residues. Disordered stretches follow at residues 72 to 123 (ESDS…NHHD), 201 to 313 (GWPD…MRER), and 389 to 434 (GDED…QPRR). Composition is skewed to basic and acidic residues over residues 83-123 (GHDA…NHHD) and 213-229 (MTDH…HNKN). Residues 230–249 (ETGSPSRPSTAHTNPTQLSH) show a composition bias toward polar residues. The segment covering 252–262 (SAASSSNNTSN) has biased composition (low complexity). Polar residues predominate over residues 270–279 (DHTSSTTATT). Residues 400-421 (STANTTTAASGSSTDNNNNNNE) show a composition bias toward low complexity.

Belongs to the MDM12 family. As to quaternary structure, component of the ER-mitochondria encounter structure (ERMES) or MDM complex, composed of mmm1, mdm10, mdm12 and mdm34. A mmm1 homodimer associates with one molecule of mdm12 on each side in a pairwise head-to-tail manner, and the SMP-LTD domains of mmm1 and mdm12 generate a continuous hydrophobic tunnel for phospholipid trafficking.

The protein localises to the mitochondrion outer membrane. It localises to the endoplasmic reticulum membrane. Its function is as follows. Component of the ERMES/MDM complex, which serves as a molecular tether to connect the endoplasmic reticulum (ER) and mitochondria. Components of this complex are involved in the control of mitochondrial shape and protein biogenesis, and function in nonvesicular lipid trafficking between the ER and mitochondria. Mdm12 is required for the interaction of the ER-resident membrane protein mmm1 and the outer mitochondrial membrane-resident beta-barrel protein mdm10. The mdm12-mmm1 subcomplex functions in the major beta-barrel assembly pathway that is responsible for biogenesis of all mitochondrial outer membrane beta-barrel proteins, and acts in a late step after the SAM complex. The mdm10-mdm12-mmm1 subcomplex further acts in the TOM40-specific pathway after the action of the mdm12-mmm1 complex. Essential for establishing and maintaining the structure of mitochondria and maintenance of mtDNA nucleoids. This Talaromyces stipitatus (strain ATCC 10500 / CBS 375.48 / QM 6759 / NRRL 1006) (Penicillium stipitatum) protein is Mitochondrial distribution and morphology protein 12.